A 710-amino-acid chain; its full sequence is Lactotransferrin (710 aa).

Residues 1–19 form the signal peptide; the sequence is MKLVFLVLLFLGALGLCLA. Phe10 carries the phosphoserine; alternate modification. A glycan (O-linked (GlcNAc) serine; alternate) is linked at Phe10. The tract at residues 20-24 is critical for glycosaminoglycan, lipid A, lysozyme and DNA binding; that stretch reads GRRRS. Bactericidal and antifungal activity regions lie at residues 20 to 29 and 39 to 49; these read GRRRSVQWCA and FQWQRNMRKVR. Residues 21-22 are important for full bactericidal and antifungal activities; sequence RR. Transferrin-like domains follow at residues 25–352 and 364–695; these read VQWC…NLRK and VVWC…NLKK. 2 disulfides stabilise this stretch: Cys28–Cys64 and Cys38–Cys55. 2 interaction with PspA regions span residues 39–46 and 57–58; these read FQWQRNMR and KR. The tract at residues 39 to 49 is interaction with lipopolysaccharide; sequence FQWQRNMRKVR. An involved in glycosaminoglycan binding region spans residues 46-51; the sequence is RKVRGP. Residue Asp79 coordinates Fe(3+). Lys92 is a catalytic residue. Tyr111 is a binding site for Fe(3+). 4 disulfide bridges follow: Cys134–Cys217, Cys176–Cys192, Cys189–Cys200, and Cys250–Cys264. Hydrogencarbonate-binding residues include Thr136, Arg140, Ala142, and Gly143. Residue Asn156 is glycosylated (N-linked (GlcNAc...) asparagine). Tyr211 is a Fe(3+) binding site. His272 is a binding site for Fe(3+). Ser278 (nucleophile) is an active-site residue. 2 cysteine pairs are disulfide-bonded: Cys367–Cys399 and Cys377–Cys390. Residues Gln379 and Ser391 each participate in a glycyl lysine isopeptide (Lys-Gly) (interchain with G-Cter in ubiquitin) cross-link. Positions 414 and 454 each coordinate Fe(3+). 8 cysteine pairs are disulfide-bonded: Cys424-Cys705, Cys446-Cys668, Cys478-Cys553, Cys502-Cys696, Cys512-Cys526, Cys523-Cys536, Cys594-Cys608, and Cys646-Cys651. Hydrogencarbonate is bound by residues Thr480, Arg484, Ala486, and Gly487. The N-linked (GlcNAc...) asparagine glycan is linked to Asn497. Tyr547 is a binding site for Fe(3+). Fe(3+) is bound at residue His616. Asn642 is a glycosylation site (N-linked (GlcNAc...) asparagine).

Belongs to the transferrin family. As to quaternary structure, monomer. Found in a complex with LTF, CLU, EPPIN and SEMG1. Found in a complex with MPO and LTF; interacts directly with CP, allows Fe(3+) incorporation into LTF and activation of CP ferroxidase activity. Post-translationally, phosphorylation at Ser-10 activates the transcriptional activity. Phosphorylation at Ser-10 also promotes proteasomal degradation. Alternatively can undergo O-GlcNAcylation at Ser-10. In terms of processing, O-GlcNAcylation at Ser-10 inhibits DNA binding and negatively regulates the transcriptional activity. Alternatively can undergo phosphorylation at Ser-10. Poly-N-acetyllactosaminic carbohydrate moiety seems to be needed for TLR4 activation. As to expression, high levels are found in saliva and tears, intermediate levels in serum and plasma, and low levels in urine. In kidney, detected in the distal collecting tubules in the medulla but not in the cortical region or in blood vessels. Detected in peripheral blood neutrophils (at protein level). Isoform 1 and isoform DeltaLf are expressed in breast, prostate, spleen, pancreas, kidney, small intestine, lung, skeletal muscle, uterus, thymus and fetal liver. Isoform 1 is expressed in brain, testis and peripheral blood leukocytes; isoform DeltaLf is barely detectable in these tissues. Isoform DeltaLf is expressed in placenta, liver and ovary; isoform 1 is barely detectable in these tissues. In kidney, isoform 1 is expressed at high levels in the collecting tubules of the medulla but at very low levels in the cortex.

The protein resides in the secreted. Its subcellular location is the cytoplasmic granule. The protein localises to the cytoplasm. It is found in the nucleus. Functionally, transferrins are iron binding transport proteins which can bind two Fe(3+) ions in association with the binding of an anion, usually bicarbonate. Its function is as follows. Major iron-binding and multifunctional protein found in exocrine fluids such as breast milk and mucosal secretions. Has antimicrobial activity, which depends on the extracellular cation concentration. Antimicrobial properties include bacteriostasis, which is related to its ability to sequester free iron and thus inhibit microbial growth, as well as direct bactericidal properties leading to the release of lipopolysaccharides from the bacterial outer membrane. Can also prevent bacterial biofilm development in P.aeruginosa infection. Has weak antifungal activity against C.albicans. Has anabolic, differentiating and anti-apoptotic effects on osteoblasts and can also inhibit osteoclastogenesis, possibly playing a role in the regulation of bone growth. Promotes binding of species C adenoviruses to epithelial cells, promoting adenovirus infection. Can inhibit papillomavirus infections. Stimulates the TLR4 signaling pathway leading to NF-kappa-B activation and subsequent pro-inflammatory cytokine production while also interfering with the lipopolysaccharide (LPS)-stimulated TLR4 signaling. Inhibits neutrophil granulocyte migration to sites of apoptosis, when secreted by apoptotic cells. Stimulates VEGFA-mediated endothelial cell migration and proliferation. Binds heparin, chondroitin sulfate and possibly other glycosaminoglycans (GAGs). Also binds specifically to pneumococcal surface protein A (PspA), the lipid A portion of bacterial lipopolysaccharide (LPS), lysozyme and DNA. Lactoferricin binds to the bacterial surface and is crucial for the bactericidal functions. Has some antiviral activity against papillomavirus infection. N-terminal region shows strong antifungal activity against C.albicans. Contains two BBXB heparin-binding consensus sequences that appear to form the predominate functional GAG-binding site. In terms of biological role, has antimicrobial activity and is able to permeabilize different ions through liposomal membranes. Functionally, has opioid antagonist activity. Shows preference for mu-receptor. Its function is as follows. Has opioid antagonist activity. Shows higher degrees of preference for kappa-receptors than for mu-receptors. The lactotransferrin transferrin-like domain 1 functions as a serine protease of the peptidase S60 family that cuts arginine rich regions. This function contributes to the antimicrobial activity. Shows a preferential cleavage at -Arg-Ser-Arg-Arg-|- and -Arg-Arg-Ser-Arg-|-, and of Z-Phe-Arg-|-aminomethylcoumarin sites. In terms of biological role, transcription factor with antiproliferative properties and ability to induce cell cycle arrest. Binds to the DeltaLf response element found in the SKP1, BAX, DCPS, and SELENOH promoters. This is Lactotransferrin from Homo sapiens (Human).